The following is a 625-amino-acid chain: Archaeosine synthase subunit alpha (625 aa).

Residues 556–624 (KYVVKIDDFV…VAVDVRHVKK (69 aa)) enclose the PUA domain.

The protein belongs to the archaeosine synthase type 1 family. In terms of assembly, forms a robust complex with the archaeosine synthase beta subunit RaSEA. Formation of this complex highly increases lysine transfer activity. The complex likely consists of an alpha(2)beta(2) heterotetrameric structure.

The enzyme catalyses 7-cyano-7-carbaguanosine(15) in tRNA + L-lysine = 7-N-[(5S)-5-amino-5-carboxypentyl]formamidino-7-deazaguanosine(15) in tRNA. The protein operates within tRNA modification; archaeosine-tRNA biosynthesis. In terms of biological role, functions in the biosynthesis of archaeosine, a modified nucleoside present in the dihydrouridine loop (D-loop) of archaeal tRNAs. Catalyzes the addition of L-lysine to the cyano group of 7-cyano-7-deazaguanine (preQ0)-modified tRNAs at position 15, to generate q0kN15-tRNA, a q0N lysine adduct identified as 7-N-[(5S)-5-amino-5-carboxypentyl]formamidino-7-deazaguanosine. The polypeptide is Archaeosine synthase subunit alpha (Methanosarcina acetivorans (strain ATCC 35395 / DSM 2834 / JCM 12185 / C2A)).